A 712-amino-acid polypeptide reads, in one-letter code: Lactoperoxidase (712 aa).

The N-terminal stretch at 1–22 (MWVCLQLPVFLASVTLFEVAAS) is a signal peptide. The propeptide occupies 23–100 (DTIAQAASTT…WEESFKRLRR (78 aa)). A glycan (N-linked (GlcNAc...) (complex) asparagine; alternate) is linked at Asn-106. An N-linked (GlcNAc...) (hybrid) asparagine; alternate glycan is attached at Asn-106. Cystine bridges form between Cys-123/Cys-284, Cys-132/Cys-145, Cys-246/Cys-256, and Cys-250/Cys-274. Asn-212 carries an N-linked (GlcNAc...) (complex) asparagine; alternate glycan. A glycan (N-linked (GlcNAc...) (high mannose) asparagine; alternate) is linked at Asn-212. Position 225 (Asp-225) interacts with heme b. His-226 serves as the catalytic Proton acceptor. Asp-227 provides a ligand contact to Ca(2+). Ca(2+)-binding residues include Thr-301, Phe-303, Asp-305, and Ser-307. Ser-315 is modified (phosphoserine). Asn-322 carries an N-linked (GlcNAc...) (high mannose) asparagine glycan. An intrachain disulfide couples Cys-354 to Cys-365. Residue Asn-358 is glycosylated (N-linked (GlcNAc...) asparagine). Glu-375 lines the heme b pocket. An N-linked (GlcNAc...) (complex) asparagine; alternate glycan is attached at Asn-449. Asn-449 carries N-linked (GlcNAc...) (hybrid) asparagine; alternate glycosylation. A glycan (N-linked (GlcNAc...) (high mannose) asparagine; alternate) is linked at Asn-449. His-468 serves as a coordination point for heme b. Tyr-482 carries the post-translational modification 3'-nitrotyrosine. 2 cysteine pairs are disulfide-bonded: Cys-573/Cys-630 and Cys-671/Cys-696.

This sequence belongs to the peroxidase family. XPO subfamily. Requires Ca(2+) as cofactor. It depends on heme b as a cofactor. In terms of tissue distribution, mammary gland; milk.

It localises to the secreted. The protein localises to the cytoplasm. The catalysed reaction is 2 a phenolic donor + H2O2 = 2 a phenolic radical donor + 2 H2O. It catalyses the reaction thiocyanate + H2O2 + H(+) = hypothiocyanous acid + H2O. It carries out the reaction iodide + H2O2 = hypoiodite + H2O. In terms of biological role, heme-containing oxidoreductase which catalyzes the conversion of thiocyanate (SCN(-)) into antimicrobial agent hypothiocyanous acid (OSCN(-)) in the presence of hydrogen peroxide (H2O2). Also involved in the conversion of iodide (I(-)) into hypoiodite (IO(-)) in the presence of H2O2. Responsible for the inactivation of a wide range of micro-organisms and hence, important component of defense mechanism. Shows antibacterial properties against E.coli, K.pneumoniae, P.aeruginosa, S.sonnei, S.saphrophyticus, S.epidermidis and S.dysenteriae. May protect the udder from infection and may promote growth in newborns. May be implicated in airway host defense against infection. May contribute to maintaining an appropriate H2O2 cellular level, therefore protecting cells from H2O2-caused injuries and inflammation. This chain is Lactoperoxidase, found in Bubalus bubalis (Domestic water buffalo).